Consider the following 265-residue polypeptide: uncharacterized protein (265 aa).

The protein resides in the mitochondrion. This is an uncharacterized protein from Paramecium tetraurelia.